A 145-amino-acid polypeptide reads, in one-letter code: 3-hydroxyacyl-[acyl-carrier-protein] dehydratase FabZ (145 aa).

The active site involves His-49.

This sequence belongs to the thioester dehydratase family. FabZ subfamily.

The protein resides in the cytoplasm. The catalysed reaction is a (3R)-hydroxyacyl-[ACP] = a (2E)-enoyl-[ACP] + H2O. Functionally, involved in unsaturated fatty acids biosynthesis. Catalyzes the dehydration of short chain beta-hydroxyacyl-ACPs and long chain saturated and unsaturated beta-hydroxyacyl-ACPs. This Rickettsia typhi (strain ATCC VR-144 / Wilmington) protein is 3-hydroxyacyl-[acyl-carrier-protein] dehydratase FabZ.